The sequence spans 88 residues: Anti-CBASS protein 2 (88 aa).

Positions 8, 9, 11, 23, 79, and 82 each coordinate 3',3'-cGAMP.

It belongs to the Acb2 family. Homohexamer when bound to 3',3'-cGAMP.

In terms of biological role, antagonizes CBASS (cyclic oligonucleotide-based antiphage signaling system). Binds and sequesters host-produced 3',3'-cyclic GMP-AMP (cGAMP) with a dissociation constant of about 30 nM; each homohexamer binds 3 cGAMP molecules with 1 cGAMP molecule binding to 2 monomers. Sequestration of cGAMP inhibits the cGAMP-activated phospholipase activity of host CBASS effector protein CapV. This chain is Anti-CBASS protein 2, found in Enterobacteria phage T4 (Bacteriophage T4).